The following is an 83-amino-acid chain: Exodeoxyribonuclease 7 small subunit (83 aa).

Belongs to the XseB family. Heterooligomer composed of large and small subunits.

The protein resides in the cytoplasm. It catalyses the reaction Exonucleolytic cleavage in either 5'- to 3'- or 3'- to 5'-direction to yield nucleoside 5'-phosphates.. Bidirectionally degrades single-stranded DNA into large acid-insoluble oligonucleotides, which are then degraded further into small acid-soluble oligonucleotides. The sequence is that of Exodeoxyribonuclease 7 small subunit from Rhizobium leguminosarum bv. trifolii (strain WSM2304).